A 172-amino-acid polypeptide reads, in one-letter code: NADH-ubiquinone oxidoreductase chain 6 (172 aa).

Transmembrane regions (helical) follow at residues 1-21, 26-48, 52-74, 86-106, and 147-167; these read MTNY…GLAL, IYGG…GFGG, GLMV…TAMA, WFIF…FYLF, and CATW…FIII.

This sequence belongs to the complex I subunit 6 family. As to quaternary structure, core subunit of respiratory chain NADH dehydrogenase (Complex I) which is composed of 45 different subunits.

It is found in the mitochondrion inner membrane. The catalysed reaction is a ubiquinone + NADH + 5 H(+)(in) = a ubiquinol + NAD(+) + 4 H(+)(out). Functionally, core subunit of the mitochondrial membrane respiratory chain NADH dehydrogenase (Complex I) which catalyzes electron transfer from NADH through the respiratory chain, using ubiquinone as an electron acceptor. Essential for the catalytic activity and assembly of complex I. The polypeptide is NADH-ubiquinone oxidoreductase chain 6 (Rattus norvegicus (Rat)).